Consider the following 143-residue polypeptide: Ribulose bisphosphate carboxylase large chain (143 aa).

Residues Met-1–Ser-2 constitute a propeptide that is removed on maturation. Pro-3 carries the post-translational modification N-acetylproline. Lys-14 carries the post-translational modification N6,N6,N6-trimethyllysine. Xaa-123 is a substrate binding site.

It belongs to the RuBisCO large chain family. Type I subfamily. As to quaternary structure, heterohexadecamer of 8 large chains and 8 small chains.

The protein localises to the plastid. It localises to the chloroplast. The catalysed reaction is 2 (2R)-3-phosphoglycerate + 2 H(+) = D-ribulose 1,5-bisphosphate + CO2 + H2O. It carries out the reaction D-ribulose 1,5-bisphosphate + O2 = 2-phosphoglycolate + (2R)-3-phosphoglycerate + 2 H(+). Its function is as follows. RuBisCO catalyzes two reactions: the carboxylation of D-ribulose 1,5-bisphosphate, the primary event in carbon dioxide fixation, as well as the oxidative fragmentation of the pentose substrate in the photorespiration process. Both reactions occur simultaneously and in competition at the same active site. The chain is Ribulose bisphosphate carboxylase large chain (rbcL) from Nemopanthus mucronatus (Catberry).